A 415-amino-acid polypeptide reads, in one-letter code: Serine/threonine transporter SstT (415 aa).

8 helical membrane passes run I23 to A43, L47 to V67, I85 to F105, A144 to L164, A181 to V201, L220 to F240, I293 to L313, and V333 to I353.

Belongs to the dicarboxylate/amino acid:cation symporter (DAACS) (TC 2.A.23) family.

The protein resides in the cell inner membrane. The catalysed reaction is L-serine(in) + Na(+)(in) = L-serine(out) + Na(+)(out). It catalyses the reaction L-threonine(in) + Na(+)(in) = L-threonine(out) + Na(+)(out). Functionally, involved in the import of serine and threonine into the cell, with the concomitant import of sodium (symport system). This is Serine/threonine transporter SstT from Klebsiella pneumoniae (strain 342).